The chain runs to 464 residues: Argininosuccinate lyase (464 aa).

Belongs to the lyase 1 family. Argininosuccinate lyase subfamily.

The protein localises to the cytoplasm. It catalyses the reaction 2-(N(omega)-L-arginino)succinate = fumarate + L-arginine. It functions in the pathway amino-acid biosynthesis; L-arginine biosynthesis; L-arginine from L-ornithine and carbamoyl phosphate: step 3/3. The polypeptide is Argininosuccinate lyase (Alcanivorax borkumensis (strain ATCC 700651 / DSM 11573 / NCIMB 13689 / SK2)).